The chain runs to 392 residues: 23S rRNA (uracil(747)-C(5))-methyltransferase RlmC (392 aa).

Positions 4, 12, 15, and 93 each coordinate [4Fe-4S] cluster. S-adenosyl-L-methionine contacts are provided by Q218, F247, E275, and N321. The active-site Nucleophile is C348.

It belongs to the class I-like SAM-binding methyltransferase superfamily. RNA M5U methyltransferase family. RlmC subfamily.

The catalysed reaction is uridine(747) in 23S rRNA + S-adenosyl-L-methionine = 5-methyluridine(747) in 23S rRNA + S-adenosyl-L-homocysteine + H(+). Functionally, catalyzes the formation of 5-methyl-uridine at position 747 (m5U747) in 23S rRNA. This is 23S rRNA (uracil(747)-C(5))-methyltransferase RlmC from Haemophilus influenzae (strain PittEE).